Reading from the N-terminus, the 270-residue chain is UPF0354 protein Bcer98_3354 (270 aa).

Belongs to the UPF0354 family.

In Bacillus cytotoxicus (strain DSM 22905 / CIP 110041 / 391-98 / NVH 391-98), this protein is UPF0354 protein Bcer98_3354.